Here is a 176-residue protein sequence, read N- to C-terminus: Phosphopantetheine adenylyltransferase (176 aa).

Thr-11 contributes to the substrate binding site. ATP contacts are provided by residues 11 to 12 (TF) and His-19. Residues Lys-43, Leu-93, and Arg-107 each coordinate substrate. ATP contacts are provided by residues Glu-117 and 141–147 (LSVVSSS).

Belongs to the bacterial CoaD family. Homohexamer. Mg(2+) serves as cofactor.

The protein resides in the cytoplasm. The enzyme catalyses (R)-4'-phosphopantetheine + ATP + H(+) = 3'-dephospho-CoA + diphosphate. Its pathway is cofactor biosynthesis; coenzyme A biosynthesis; CoA from (R)-pantothenate: step 4/5. Functionally, reversibly transfers an adenylyl group from ATP to 4'-phosphopantetheine, yielding dephospho-CoA (dPCoA) and pyrophosphate. The chain is Phosphopantetheine adenylyltransferase from Tropheryma whipplei (strain TW08/27) (Whipple's bacillus).